Here is a 130-residue protein sequence, read N- to C-terminus: Small ribosomal subunit protein uS9 (130 aa).

Belongs to the universal ribosomal protein uS9 family.

In Pseudomonas entomophila (strain L48), this protein is Small ribosomal subunit protein uS9.